The following is a 189-amino-acid chain: Elongation factor P (189 aa).

This sequence belongs to the elongation factor P family.

It localises to the cytoplasm. It participates in protein biosynthesis; polypeptide chain elongation. In terms of biological role, involved in peptide bond synthesis. Stimulates efficient translation and peptide-bond synthesis on native or reconstituted 70S ribosomes in vitro. Probably functions indirectly by altering the affinity of the ribosome for aminoacyl-tRNA, thus increasing their reactivity as acceptors for peptidyl transferase. The polypeptide is Elongation factor P (Orientia tsutsugamushi (strain Ikeda) (Rickettsia tsutsugamushi)).